The chain runs to 24 residues: Ascaphin-3 (24 aa).

Expressed by the skin glands.

It is found in the secreted. In terms of biological role, antimicrobial peptide that shows higher potency against Gram-negative bacteria than against Gram-positive bacteria. Has a very week hemolytic activity. The polypeptide is Ascaphin-3 (Ascaphus truei (Coastal tailed frog)).